The following is a 285-amino-acid chain: Geranyl diphosphate 2-C-methyltransferase (285 aa).

Belongs to the geranyl diphosphate 2-C-methyltransferase family. The cofactor is Mg(2+).

It catalyses the reaction (2E)-geranyl diphosphate + S-adenosyl-L-methionine = (E)-2-methylgeranyl diphosphate + S-adenosyl-L-homocysteine + H(+). In terms of biological role, catalyzes the SAM-dependent methylation of geranyl diphosphate (GPP) to yield (E)-2-methylgeranyl diphosphate (2-MeGPP). The chain is Geranyl diphosphate 2-C-methyltransferase from Saccharopolyspora erythraea (strain ATCC 11635 / DSM 40517 / JCM 4748 / NBRC 13426 / NCIMB 8594 / NRRL 2338).